A 232-amino-acid chain; its full sequence is Cytochrome c oxidase subunit 2 (232 aa).

Residues 1–30 (MNNFFQDFNLLFSSSLFSSYMDWFYNFNCS) lie on the Mitochondrial intermembrane side of the membrane. The chain crosses the membrane as a helical span at residues 31–52 (LLFGVLSFVSTMFVYLLLSSFY). Topologically, residues 53-69 (FKSKKIEYQFGELLCSV) are mitochondrial matrix. A helical transmembrane segment spans residues 70–89 (FPTLILVMQMVPSLSLLYYY). Over 90–232 (GLMNLDSSLT…KSWCVGLLSD (143 aa)) the chain is Mitochondrial intermembrane. Residues histidine 164, cysteine 199, glutamate 201, cysteine 203, histidine 207, and methionine 210 each coordinate Cu cation. A Mg(2+)-binding site is contributed by glutamate 201.

The protein belongs to the cytochrome c oxidase subunit 2 family. As to quaternary structure, component of the cytochrome c oxidase (complex IV, CIV), a multisubunit enzyme composed of a catalytic core of 3 subunits and several supernumerary subunits. The complex exists as a monomer or a dimer and forms supercomplexes (SCs) in the inner mitochondrial membrane with ubiquinol-cytochrome c oxidoreductase (cytochrome b-c1 complex, complex III, CIII). Cu cation serves as cofactor.

It localises to the mitochondrion inner membrane. The enzyme catalyses 4 Fe(II)-[cytochrome c] + O2 + 8 H(+)(in) = 4 Fe(III)-[cytochrome c] + 2 H2O + 4 H(+)(out). Its function is as follows. Component of the cytochrome c oxidase, the last enzyme in the mitochondrial electron transport chain which drives oxidative phosphorylation. The respiratory chain contains 3 multisubunit complexes succinate dehydrogenase (complex II, CII), ubiquinol-cytochrome c oxidoreductase (cytochrome b-c1 complex, complex III, CIII) and cytochrome c oxidase (complex IV, CIV), that cooperate to transfer electrons derived from NADH and succinate to molecular oxygen, creating an electrochemical gradient over the inner membrane that drives transmembrane transport and the ATP synthase. Cytochrome c oxidase is the component of the respiratory chain that catalyzes the reduction of oxygen to water. Electrons originating from reduced cytochrome c in the intermembrane space (IMS) are transferred via the dinuclear copper A center (CU(A)) of subunit 2 and heme A of subunit 1 to the active site in subunit 1, a binuclear center (BNC) formed by heme A3 and copper B (CU(B)). The BNC reduces molecular oxygen to 2 water molecules using 4 electrons from cytochrome c in the IMS and 4 protons from the mitochondrial matrix. The protein is Cytochrome c oxidase subunit 2 (COII) of Ascaris suum (Pig roundworm).